The following is a 139-amino-acid chain: Large ribosomal subunit protein bL17 (139 aa).

It belongs to the bacterial ribosomal protein bL17 family. In terms of assembly, part of the 50S ribosomal subunit. Contacts protein L32.

The polypeptide is Large ribosomal subunit protein bL17 (Azorhizobium caulinodans (strain ATCC 43989 / DSM 5975 / JCM 20966 / LMG 6465 / NBRC 14845 / NCIMB 13405 / ORS 571)).